A 536-amino-acid chain; its full sequence is uncharacterized protein (536 aa).

The SWIM-type zinc finger occupies L71 to Y98. Positions Y482–K528 form a coiled coil.

This is an uncharacterized protein from Bacillus subtilis (strain 168).